The primary structure comprises 957 residues: Leucine--tRNA ligase (957 aa).

Residues 70 to 81 (PYPSGAGLHVGH) carry the 'HIGH' region motif. Residues 727-731 (KMGKS) carry the 'KMSKS' region motif. Residue K730 coordinates ATP.

The protein belongs to the class-I aminoacyl-tRNA synthetase family.

Its subcellular location is the cytoplasm. It catalyses the reaction tRNA(Leu) + L-leucine + ATP = L-leucyl-tRNA(Leu) + AMP + diphosphate. The polypeptide is Leucine--tRNA ligase (Corynebacterium efficiens (strain DSM 44549 / YS-314 / AJ 12310 / JCM 11189 / NBRC 100395)).